The sequence spans 328 residues: Phenylalanine--tRNA ligase alpha subunit (328 aa).

This sequence belongs to the class-II aminoacyl-tRNA synthetase family. Phe-tRNA synthetase alpha subunit type 1 subfamily. In terms of assembly, tetramer of two alpha and two beta subunits. Mg(2+) is required as a cofactor.

Its subcellular location is the cytoplasm. The enzyme catalyses tRNA(Phe) + L-phenylalanine + ATP = L-phenylalanyl-tRNA(Phe) + AMP + diphosphate + H(+). In Buchnera aphidicola subsp. Baizongia pistaciae (strain Bp), this protein is Phenylalanine--tRNA ligase alpha subunit.